The primary structure comprises 418 residues: Glutamyl-tRNA reductase (418 aa).

Residues Thr49–Arg52, Ser109, Glu114–Gln116, and Gln120 contribute to the substrate site. Catalysis depends on Cys50, which acts as the Nucleophile. Gly189 to Ile194 is a binding site for NADP(+).

It belongs to the glutamyl-tRNA reductase family. Homodimer.

The catalysed reaction is (S)-4-amino-5-oxopentanoate + tRNA(Glu) + NADP(+) = L-glutamyl-tRNA(Glu) + NADPH + H(+). It functions in the pathway porphyrin-containing compound metabolism; protoporphyrin-IX biosynthesis; 5-aminolevulinate from L-glutamyl-tRNA(Glu): step 1/2. Its function is as follows. Catalyzes the NADPH-dependent reduction of glutamyl-tRNA(Glu) to glutamate 1-semialdehyde (GSA). The protein is Glutamyl-tRNA reductase of Escherichia coli O157:H7.